We begin with the raw amino-acid sequence, 332 residues long: Melanocortin receptor 4 (332 aa).

The Extracellular segment spans residues 1–43 (MNSTLQHGMHTSLHFWNRSTYGQHSNATESLGKGYPDGGCYEQ). 3 N-linked (GlcNAc...) asparagine glycosylation sites follow: N2, N17, and N26. 2 cysteine pairs are disulfide-bonded: C40–C279 and C271–C277. A helical membrane pass occupies residues 44-69 (LFVSPEVFVTLGVISLLENILVIVAI). At 70–81 (AKNKNLHSPMYF) the chain is on the cytoplasmic side. The helical transmembrane segment at 82–106 (FICSLAVADMLVSVSNGSETIVITL) threads the bilayer. Residues E100, D122, and D126 each contribute to the Ca(2+) site. At 107–123 (LNSTDTDAQSFTVNIDN) the chain is on the extracellular side. The helical transmembrane segment at 124–145 (VIDSVICSSLLASICSLLSIAV) threads the bilayer. Residues 146–165 (DRYFTIFYALQYHNIMTVRR) lie on the Cytoplasmic side of the membrane. Residues 166–186 (VGIIISCIWAACTVSGILFII) form a helical membrane-spanning segment. Residues 187–191 (YSDST) are Extracellular-facing. The chain crosses the membrane as a helical span at residues 192 to 215 (AVIICLITMFFTMLALMASLYVHM). Residues 216-248 (FLMARLHIKRIAVLPGTGTIRQGANMKGAITLT) are Cytoplasmic-facing. The chain crosses the membrane as a helical span at residues 249 to 271 (ILIGVFVVCWAPFFLHLIFYISC). Over 272-280 (PQNPYCVCF) the chain is Extracellular. A helical membrane pass occupies residues 281-304 (MSHFNLYLILIMCNSIIDPLIYAL). The Cytoplasmic portion of the chain corresponds to 305 to 332 (RSQELRKTFKEIICCYPLGGLCDLSSRY). C318 carries the S-palmitoyl cysteine lipid modification.

It belongs to the G-protein coupled receptor 1 family. In terms of assembly, homodimer; disulfide-linked, also forms higher order oligomers. Interacts with GNAS. Interacts with ATRNL1. Interacts with MGRN1; this interaction competes with GNAS-binding and thus inhibits agonist-induced cAMP production. Interacts with MRAP and MRAP2; these associated factors increase ligand-sensitivity and generation of cAMP.

It is found in the cell membrane. Its function is as follows. Hormone receptor that acts as a key component of the leptin-melanocortin pathway at the intersection of homeostatic maintenance of energetic state. Plays a role in regulating food intake: activation by a stimulating hormone such as anorexigenic alpha-melanocyte stimulating hormone (alpha-MSH) inhibits appetite, whereas binding to a natural antagonist like Agouti-related protein/AGRP promotes appetite. G-protein-coupled receptor that activates conventional Galphas signaling leading to induction of anorexogenic signaling in the hypothalamus to result in negative energy balance. Regulates the firing activity of neurons from the hypothalamus by alpha-MSH and AGRP independently of Galphas signaling by ligand-induced coupling of closure of inwardly rectifying potassium channel KCNJ13. In intestinal epithelial cells, plays a role in the inhibition of hepatic glucose production via nesfatin-1/NUCB2 leading to increased cyclic adenosine monophosphate (cAMP) levels and glucagon-like peptide 1 (GLP-1) secretion in the intestinal epithelium. The protein is Melanocortin receptor 4 (MC4R) of Vulpes vulpes (Red fox).